A 300-amino-acid chain; its full sequence is Bifunctional protein FolD (300 aa).

NADP(+) is bound by residues 168 to 170, Ser-193, and Ile-234; that span reads GRS.

The protein belongs to the tetrahydrofolate dehydrogenase/cyclohydrolase family. As to quaternary structure, homodimer.

It catalyses the reaction (6R)-5,10-methylene-5,6,7,8-tetrahydrofolate + NADP(+) = (6R)-5,10-methenyltetrahydrofolate + NADPH. The catalysed reaction is (6R)-5,10-methenyltetrahydrofolate + H2O = (6R)-10-formyltetrahydrofolate + H(+). The protein operates within one-carbon metabolism; tetrahydrofolate interconversion. Catalyzes the oxidation of 5,10-methylenetetrahydrofolate to 5,10-methenyltetrahydrofolate and then the hydrolysis of 5,10-methenyltetrahydrofolate to 10-formyltetrahydrofolate. The chain is Bifunctional protein FolD from Ehrlichia ruminantium (strain Welgevonden).